A 54-amino-acid chain; its full sequence is Large ribosomal subunit protein bL33B (54 aa).

This sequence belongs to the bacterial ribosomal protein bL33 family.

This chain is Large ribosomal subunit protein bL33B, found in Mycobacterium sp. (strain JLS).